The chain runs to 191 residues: Large ribosomal subunit protein bL9 (191 aa).

The disordered stretch occupies residues 151–191 (AERQAKGESLTSADAIYGVDEDALKPEDFFNPEAEIESEEE).

This sequence belongs to the bacterial ribosomal protein bL9 family.

Binds to the 23S rRNA. The sequence is that of Large ribosomal subunit protein bL9 from Sinorhizobium medicae (strain WSM419) (Ensifer medicae).